A 65-amino-acid polypeptide reads, in one-letter code: Large ribosomal subunit protein bL35 (65 aa).

Belongs to the bacterial ribosomal protein bL35 family.

This chain is Large ribosomal subunit protein bL35, found in Erwinia tasmaniensis (strain DSM 17950 / CFBP 7177 / CIP 109463 / NCPPB 4357 / Et1/99).